The following is a 271-amino-acid chain: 5-deoxy-glucuronate isomerase (271 aa).

Belongs to the isomerase IolB family.

The catalysed reaction is 5-deoxy-D-glucuronate = 5-dehydro-2-deoxy-D-gluconate. It participates in polyol metabolism; myo-inositol degradation into acetyl-CoA; acetyl-CoA from myo-inositol: step 4/7. Involved in the isomerization of 5-deoxy-glucuronate (5DG) to 5-dehydro-2-deoxy-D-gluconate (DKG or 2-deoxy-5-keto-D-gluconate). The sequence is that of 5-deoxy-glucuronate isomerase from Lacticaseibacillus casei (Lactobacillus casei).